The sequence spans 505 residues: Glycerol kinase (505 aa).

Threonine 14 is an ADP binding site. ATP is bound by residues threonine 14, threonine 15, and serine 16. A sn-glycerol 3-phosphate-binding site is contributed by threonine 14. An ADP-binding site is contributed by arginine 18. 4 residues coordinate sn-glycerol 3-phosphate: arginine 84, glutamate 85, tyrosine 136, and aspartate 246. Glycerol-binding residues include arginine 84, glutamate 85, tyrosine 136, aspartate 246, and glutamine 247. 2 residues coordinate ADP: threonine 268 and glycine 311. Residues threonine 268, glycine 311, glutamine 315, and glycine 412 each coordinate ATP. ADP contacts are provided by glycine 412 and asparagine 416.

It belongs to the FGGY kinase family.

The catalysed reaction is glycerol + ATP = sn-glycerol 3-phosphate + ADP + H(+). Its pathway is polyol metabolism; glycerol degradation via glycerol kinase pathway; sn-glycerol 3-phosphate from glycerol: step 1/1. With respect to regulation, inhibited by fructose 1,6-bisphosphate (FBP). Key enzyme in the regulation of glycerol uptake and metabolism. Catalyzes the phosphorylation of glycerol to yield sn-glycerol 3-phosphate. The chain is Glycerol kinase from Vibrio vulnificus (strain CMCP6).